Reading from the N-terminus, the 325-residue chain is L-lactate dehydrogenase 1 (325 aa).

NAD(+)-binding positions include valine 17, aspartate 38, lysine 43, tyrosine 68, and 82 to 83 (GA). Substrate is bound by residues glutamine 85, arginine 91, and 123–126 (NPVD). NAD(+)-binding positions include 121–123 (AAN) and serine 146. 151–154 (DTAR) is a substrate binding site. Beta-D-fructose 1,6-bisphosphate is bound by residues arginine 156 and histidine 171. Histidine 178 serves as the catalytic Proton acceptor. Tyrosine 223 bears the Phosphotyrosine mark. Residue threonine 232 coordinates substrate.

Belongs to the LDH/MDH superfamily. LDH family. As to quaternary structure, homotetramer.

It localises to the cytoplasm. The enzyme catalyses (S)-lactate + NAD(+) = pyruvate + NADH + H(+). It participates in fermentation; pyruvate fermentation to lactate; (S)-lactate from pyruvate: step 1/1. With respect to regulation, allosterically activated by fructose 1,6-bisphosphate (FBP). Functionally, catalyzes the conversion of lactate to pyruvate. This is L-lactate dehydrogenase 1 from Lactococcus lactis subsp. cremoris (Streptococcus cremoris).